A 299-amino-acid chain; its full sequence is F-actin-capping protein subunit alpha-3 (299 aa).

Residues serine 2 and serine 290 each carry the phosphoserine modification.

It belongs to the F-actin-capping protein alpha subunit family. Component of the F-actin capping complex, composed of a heterodimer of an alpha and a beta subunit. Component of the WASH complex, composed of F-actin-capping protein subunit alpha (CAPZA1, CAPZA2 or CAPZA3), F-actin-capping protein subunit beta (CAPZB), WASHC1, WASHC2, WASHC3, WASHC4 and WASHC5. As to expression, exclusively expressed in the testis.

The protein localises to the cytoplasm. It localises to the cytoskeleton. In terms of biological role, F-actin-capping proteins bind in a Ca(2+)-independent manner to the fast growing ends of actin filaments (barbed end) thereby blocking the exchange of subunits at these ends. Unlike other capping proteins (such as gelsolin and severin), these proteins do not sever actin filaments. May play a role in the morphogenesis of spermatid. The polypeptide is F-actin-capping protein subunit alpha-3 (Capza3) (Mus musculus (Mouse)).